We begin with the raw amino-acid sequence, 137 residues long: Acidic phospholipase A2 beta-bungarotoxin A6 chain (137 aa).

Positions 1 to 9 (AVCVSLLGA) are cleaved as a signal peptide. A propeptide spanning residues 10–17 (ANIPPQHL) is cleaved from the precursor. 6 cysteine pairs are disulfide-bonded: Cys-44–Cys-136, Cys-46–Cys-62, Cys-61–Cys-117, Cys-68–Cys-110, Cys-78–Cys-103, and Cys-96–Cys-108. The Ca(2+) site is built by Tyr-45, Gly-47, and Gly-49. Residue His-65 is part of the active site. Asp-66 provides a ligand contact to Ca(2+). Asp-111 is a catalytic residue.

Belongs to the phospholipase A2 family. Group I subfamily. D49 sub-subfamily. In terms of assembly, heterodimer; disulfide-linked. The A chains have phospholipase A2 activity and the B chains show homology with the basic protease inhibitors. It depends on Ca(2+) as a cofactor. In terms of tissue distribution, expressed by the venom gland.

It is found in the secreted. It carries out the reaction a 1,2-diacyl-sn-glycero-3-phosphocholine + H2O = a 1-acyl-sn-glycero-3-phosphocholine + a fatty acid + H(+). Functionally, snake venom phospholipase A2 (PLA2) that inhibits neuromuscular transmission by blocking acetylcholine release from the nerve termini. PLA2 catalyzes the calcium-dependent hydrolysis of the 2-acyl groups in 3-sn-phosphoglycerides. The sequence is that of Acidic phospholipase A2 beta-bungarotoxin A6 chain from Bungarus multicinctus (Many-banded krait).